The primary structure comprises 449 residues: MAIHPVEFRYGTPEMRVIWEAENKLQKMLDVEAALAQAEGELGIIPAEAASEIVRKASTEFVTLERVNEIERDTKHDIASLVKALAEQCEGDAGEYVHFGATSNDIVDTSNSLLLRDSISVLRDKLTRVLEVLLALADENRDRVCIGRTHGQHALPTTYGMKFAIWADEIHRQLERLDACSERLCVGMMTGAVGTTAALGEEGLEVHERVSEILGLRPVLISNQVVQRDNHAEFIMVLANIATTLDKIALEIRNLQRTEIMEVGEKFDPEKQVGSSTMPHKMNPITAERICGIARVIRSYVVAALENNPLWHERDLTNSSSERIILPEACILTDYILKLTLDVLCNLVFYPENIKRNLEFTGGLIMAERLMAELTRRGMGRQTAYAAVRQCAIEASRTGRSLRDVVLERSEIMDYLTVEDLEEIMNPETYIGSARRMVERVLEESQKWL.

N(6)-(1,2-dicarboxyethyl)-AMP-binding positions include 9-10 (RY), 75-77 (KHD), and 102-103 (TS). Catalysis depends on H150, which acts as the Proton donor/acceptor. Residue Q224 participates in N(6)-(1,2-dicarboxyethyl)-AMP binding. The active-site Proton donor/acceptor is S275. N(6)-(1,2-dicarboxyethyl)-AMP-binding positions include S276, 281 to 283 (KMN), and 320 to 324 (SSERI).

It belongs to the lyase 1 family. Adenylosuccinate lyase subfamily. In terms of assembly, homotetramer. Residues from neighboring subunits contribute catalytic and substrate-binding residues to each active site.

It catalyses the reaction N(6)-(1,2-dicarboxyethyl)-AMP = fumarate + AMP. The enzyme catalyses (2S)-2-[5-amino-1-(5-phospho-beta-D-ribosyl)imidazole-4-carboxamido]succinate = 5-amino-1-(5-phospho-beta-D-ribosyl)imidazole-4-carboxamide + fumarate. The protein operates within purine metabolism; AMP biosynthesis via de novo pathway; AMP from IMP: step 2/2. It participates in purine metabolism; IMP biosynthesis via de novo pathway; 5-amino-1-(5-phospho-D-ribosyl)imidazole-4-carboxamide from 5-amino-1-(5-phospho-D-ribosyl)imidazole-4-carboxylate: step 2/2. Functionally, catalyzes two reactions in de novo purine nucleotide biosynthesis. Catalyzes the breakdown of 5-aminoimidazole- (N-succinylocarboxamide) ribotide (SAICAR or 2-[5-amino-1-(5-phospho-beta-D-ribosyl)imidazole-4-carboxamido]succinate) to 5-aminoimidazole-4-carboxamide ribotide (AICAR or 5-amino-1-(5-phospho-beta-D-ribosyl)imidazole-4-carboxamide) and fumarate, and of adenylosuccinate (ADS or N(6)-(1,2-dicarboxyethyl)-AMP) to adenosine monophosphate (AMP) and fumarate. The polypeptide is Adenylosuccinate lyase (purB) (Methanothermobacter thermautotrophicus (strain ATCC 29096 / DSM 1053 / JCM 10044 / NBRC 100330 / Delta H) (Methanobacterium thermoautotrophicum)).